The primary structure comprises 456 residues: Sulfoacetaldehyde dehydrogenase (456 aa).

213 to 218 (GGTAAA) is a binding site for NAD(+). Catalysis depends on residues Glu233 and Cys267.

The protein belongs to the aldehyde dehydrogenase family. As to quaternary structure, homotetramer.

It carries out the reaction sulfoacetaldehyde + NAD(+) + H2O = sulfoacetate + NADH + 2 H(+). Functionally, mediates conversion of 2-sulfoacetaldehyde into sulfoacetate. The enzyme is specific for NAD; NADP is not a substrate. Part of a pathway that can utilize the amino group of taurine as a sole source of nitrogen for growth. The sequence is that of Sulfoacetaldehyde dehydrogenase (safD) from Neptuniibacter caesariensis.